The chain runs to 243 residues: MRYLVDTHTHTIVSGHAYTTFLENVQEASNIGLKVLGTTDHGPSMPGGPNLFYFNNFKVMPRKLKGVTLLHGCEANIIDFKGMLDIPDFTQKKLDVIIASLHDVCIRPGSMEENTEALINVMENPYVDILGHIGNPSFPINEEVVVKKAKEKNVLIEINNGSFVSRKGSEETCKKVANLCKKHKVNIIVGSDSHVCFQIGRFPKADNMLKEIGMPEELIINNEENKILEYLKNKGKLKDLNLD.

H8, H10, H16, H41, E74, H102, H132, D192, and H194 together coordinate Zn(2+).

The protein belongs to the PHP family. Zn(2+) serves as cofactor.

The protein is Probable phosphatase CLI_3563 of Clostridium botulinum (strain Langeland / NCTC 10281 / Type F).